The primary structure comprises 426 residues: N-formyl-4-amino-5-aminomethyl-2-methylpyrimidine deformylase (426 aa).

A coiled-coil region spans residues Met-1–Thr-31. Residue His-89 coordinates Zn(2+). Asp-91 is an active-site residue. Asp-122 contributes to the Zn(2+) binding site. The Proton acceptor role is filled by Glu-156. Zn(2+) contacts are provided by Glu-157, Asp-180, and His-394.

Belongs to the peptidase M20A family. The cofactor is Zn(2+). It depends on Co(2+) as a cofactor.

The catalysed reaction is N-formyl-4-amino-5-aminomethyl-2-methylpyrimidine + H2O = 4-amino-5-aminomethyl-2-methylpyrimidine + formate. The protein operates within cofactor biosynthesis; thiamine diphosphate biosynthesis. In terms of biological role, catalyzes the deformylation of the formylaminopyrimidine N-formyl-4-amino-5-aminomethyl-2-methylpyrimidine (FAMP) to give the corresponding aminopyrimidine. This chain is N-formyl-4-amino-5-aminomethyl-2-methylpyrimidine deformylase, found in Bacillus subtilis (strain 168).